A 187-amino-acid chain; its full sequence is Small ribosomal subunit protein uS5 (187 aa).

The S5 DRBM domain maps to 21 to 84 (MVDKLVHINR…ESAKRDMIFV (64 aa)).

Belongs to the universal ribosomal protein uS5 family. Part of the 30S ribosomal subunit. Contacts proteins S4 and S8.

Functionally, with S4 and S12 plays an important role in translational accuracy. Located at the back of the 30S subunit body where it stabilizes the conformation of the head with respect to the body. This is Small ribosomal subunit protein uS5 from Mesorhizobium japonicum (strain LMG 29417 / CECT 9101 / MAFF 303099) (Mesorhizobium loti (strain MAFF 303099)).